The sequence spans 473 residues: Photosystem II CP43 reaction center protein (473 aa).

A propeptide spanning residues 1 to 14 (MKTLYSLRRFSHVE) is cleaved from the precursor. At T15 the chain carries N-acetylthreonine. A Phosphothreonine modification is found at T15. The next 5 helical transmembrane spans lie at 69 to 93 (LFEV…PHLA), 134 to 155 (LLGP…KDRN), 178 to 200 (KALY…RKIT), 255 to 275 (KPFA…LSYS), and 291 to 312 (WFNN…ASQA). E367 contacts [CaMn4O5] cluster. The helical transmembrane segment at 447–471 (RARAAAAGFEKGIDRDFEPVLSMTP) threads the bilayer.

It belongs to the PsbB/PsbC family. PsbC subfamily. In terms of assembly, PSII is composed of 1 copy each of membrane proteins PsbA, PsbB, PsbC, PsbD, PsbE, PsbF, PsbH, PsbI, PsbJ, PsbK, PsbL, PsbM, PsbT, PsbX, PsbY, PsbZ, Psb30/Ycf12, at least 3 peripheral proteins of the oxygen-evolving complex and a large number of cofactors. It forms dimeric complexes. It depends on Binds multiple chlorophylls and provides some of the ligands for the Ca-4Mn-5O cluster of the oxygen-evolving complex. It may also provide a ligand for a Cl- that is required for oxygen evolution. PSII binds additional chlorophylls, carotenoids and specific lipids. as a cofactor.

Its subcellular location is the plastid membrane. One of the components of the core complex of photosystem II (PSII). It binds chlorophyll and helps catalyze the primary light-induced photochemical processes of PSII. PSII is a light-driven water:plastoquinone oxidoreductase, using light energy to abstract electrons from H(2)O, generating O(2) and a proton gradient subsequently used for ATP formation. In Cuscuta gronovii (Common dodder), this protein is Photosystem II CP43 reaction center protein.